The following is a 309-amino-acid chain: Homoserine O-succinyltransferase (309 aa).

The active-site Acyl-thioester intermediate is the Cys-142. Residues Lys-163 and Ser-192 each contribute to the substrate site. Residue His-235 is the Proton acceptor of the active site. Residue Glu-237 is part of the active site. Arg-249 lines the substrate pocket.

Belongs to the MetA family. In terms of assembly, homodimer.

Its subcellular location is the cytoplasm. It catalyses the reaction L-homoserine + succinyl-CoA = O-succinyl-L-homoserine + CoA. It functions in the pathway amino-acid biosynthesis; L-methionine biosynthesis via de novo pathway; O-succinyl-L-homoserine from L-homoserine: step 1/1. Transfers a succinyl group from succinyl-CoA to L-homoserine, forming succinyl-L-homoserine. The protein is Homoserine O-succinyltransferase of Escherichia coli (strain SE11).